The primary structure comprises 60 residues: Metallothionein (60 aa).

The interval 1-28 (MDPCECSKTGNCTCGGSCTCKNCSCTSC) is beta. Residues Cys4, Cys6, Cys12, Cys14, Cys18, Cys20, Cys23, Cys25, Cys28, Cys32, Cys33, Cys35, Cys36, Cys40, Cys43, Cys47, Cys49, Cys54, Cys58, and Cys59 each coordinate a divalent metal cation. Positions 29 to 60 (KKSCCSCCPSGCSKCASGCVCKGKTCDTSCCQ) are alpha.

Belongs to the metallothionein superfamily. Type 1 family.

In terms of biological role, metallothioneins have a high content of cysteine residues that bind various heavy metals. The polypeptide is Metallothionein (mt) (Gobiomorphus cotidianus (New Zealand common bully)).